The following is a 171-amino-acid chain: 3-hydroxydecanoyl-[acyl-carrier-protein] dehydratase (171 aa).

Residue His-70 is part of the active site.

Belongs to the thioester dehydratase family. FabA subfamily. Homodimer.

Its subcellular location is the cytoplasm. It carries out the reaction a (3R)-hydroxyacyl-[ACP] = a (2E)-enoyl-[ACP] + H2O. The catalysed reaction is (3R)-hydroxydecanoyl-[ACP] = (2E)-decenoyl-[ACP] + H2O. It catalyses the reaction (2E)-decenoyl-[ACP] = (3Z)-decenoyl-[ACP]. It functions in the pathway lipid metabolism; fatty acid biosynthesis. Its function is as follows. Necessary for the introduction of cis unsaturation into fatty acids. Catalyzes the dehydration of (3R)-3-hydroxydecanoyl-ACP to E-(2)-decenoyl-ACP and then its isomerization to Z-(3)-decenoyl-ACP. Can catalyze the dehydratase reaction for beta-hydroxyacyl-ACPs with saturated chain lengths up to 16:0, being most active on intermediate chain length. The polypeptide is 3-hydroxydecanoyl-[acyl-carrier-protein] dehydratase (Pseudoalteromonas translucida (strain TAC 125)).